The sequence spans 1689 residues: Cullin-7 (1689 aa).

Residues 349–422 (RASFASFNTY…HWHMLEILGF (74 aa)) form the CPH domain. In terms of domain architecture, DOC spans 793–972 (PIQIPFFDVF…HTRLFYMVRA (180 aa)). A compositionally biased stretch (basic and acidic residues) spans 1321-1337 (VAHEDSGREDKSKKEEA). The tract at residues 1321-1371 (VAHEDSGREDKSKKEEAIGEAAAVAMAEEEDQGKKEEGEEEGEGEDEEEER) is disordered. Residues 1358 to 1370 (GEEEGEGEDEEEE) show a composition bias toward acidic residues. Residue Lys-1567 forms a Glycyl lysine isopeptide (Lys-Gly) (interchain with G-Cter in NEDD8) linkage.

This sequence belongs to the cullin family. As to quaternary structure, component of the 3M complex, composed of core components CUL7, CCDC8 and OBSL1. Component of the Cul7-RING(FBXW8) complex consisting of CUL7, RBX1, SKP1 and FBXW8. Within the Cul7-RING(FBXW8) complex interacts with FBXW8 and RBX1, but not with SKP1. Interacts with CUL1 (via the C-terminal domain); the interaction seems to be mediated by FBXW8; it is likely specific to FBXW8, but not other F-box proteins. Interacts (via the CPH domain) with p53/TP53; the interaction preferentially involves tetrameric and dimeric p53/TP53; this interaction recruits p53/TP53 for ubiquitination by neddylated CUL1-RBX1. The CUL7-CUL9 heterodimer seems to interact specifically with p53/TP53. Interacts with FBXW8; interaction is mutually exclusive of binding to CUL9 or p53/TP53. Interacts with CUL9; leading to inhibited CUL9 activity. Interacts with OBSL1. Interacts (as part of the 3M complex) with HDAC4 and HDAC5; it is negatively regulated by ANKRA2.

Its subcellular location is the cytoplasm. The protein resides in the cytoskeleton. It is found in the microtubule organizing center. The protein localises to the centrosome. It localises to the perinuclear region. Its subcellular location is the golgi apparatus. It participates in protein modification; protein ubiquitination. Core component of the 3M and Cul7-RING(FBXW8) complexes, which mediate the ubiquitination and subsequent proteasomal degradation of target proteins. Core component of the 3M complex, a complex required to regulate microtubule dynamics and genome integrity. It is unclear how the 3M complex regulates microtubules, it could act by controlling the level of a microtubule stabilizer. The Cul7-RING(FBXW8) complex alone lacks ubiquitination activity and does not promote polyubiquitination and proteasomal degradation of p53/TP53. However it mediates recruitment of p53/TP53 for ubiquitination by neddylated CUL1-RBX1. Interaction with CUL9 is required to inhibit CUL9 activity and ubiquitination of BIRC5. The Cul7-RING(FBXW8) complex also mediates ubiquitination and consequent degradation of target proteins such as GORASP1, IRS1 and MAP4K1/HPK1. Ubiquitination of GORASP1 regulates Golgi morphogenesis and dendrite patterning in brain. Mediates ubiquitination and degradation of IRS1 in a mTOR-dependent manner: the Cul7-RING(FBXW8) complex recognizes and binds IRS1 previously phosphorylated by S6 kinase (RPS6KB1 or RPS6KB2). The Cul7-RING(FBXW8) complex also mediates ubiquitination of MAP4K1/HPK1: recognizes and binds autophosphorylated MAP4K1/HPK1, leading to its degradation, thereby affecting cell proliferation and differentiation. Acts as a regulator in trophoblast cell epithelial-mesenchymal transition and placental development. While the Cul7-RING(FBXW8) and the 3M complexes are associated and involved in common processes, CUL7 and the Cul7-RING(FBXW8) complex may have additional functions. Probably plays a role in the degradation of proteins involved in endothelial proliferation and/or differentiation. The protein is Cullin-7 (Cul7) of Mus musculus (Mouse).